The primary structure comprises 528 residues: Na(+)/H(+) antiporter NhaB (528 aa).

11 helical membrane-spanning segments follow: residues 29 to 49, 52 to 72, 95 to 115, 139 to 159, 203 to 223, 248 to 268, 304 to 324, 349 to 369, 390 to 410, 448 to 468, and 476 to 496; these read LIIN…LLVI, IFTL…LLAI, VLLL…LLLF, AFLS…AVAV, LLMH…VGEP, VPVF…KIFG, AFIG…VGLI, EEAL…AVII, LVIF…VFVG, ATPN…APLI, and VWMA…AIEL.

Belongs to the NhaB Na(+)/H(+) (TC 2.A.34) antiporter family.

The protein resides in the cell inner membrane. The catalysed reaction is 2 Na(+)(in) + 3 H(+)(out) = 2 Na(+)(out) + 3 H(+)(in). Functionally, na(+)/H(+) antiporter that extrudes sodium in exchange for external protons. The protein is Na(+)/H(+) antiporter NhaB of Shewanella woodyi (strain ATCC 51908 / MS32).